Consider the following 174-residue polypeptide: WAP four-disulfide core domain protein 2 (174 aa).

The signal sequence occupies residues 1–25 (MPACRLCLLAAGLLLGLLLFTPISA). The 46-residue stretch at 29–74 (DAEKPGECPQLEPITDCVLECTLDKDCADNRKCCQAGCSSVCSKPN) folds into the WAP 1 domain. 4 cysteine pairs are disulfide-bonded: cysteine 36–cysteine 62, cysteine 45–cysteine 66, cysteine 49–cysteine 61, and cysteine 55–cysteine 70. The disordered stretch occupies residues 68–117 (SVCSKPNGPSEGELSGTDTKLSETGTTTQSAGLDHTTKPPGGQVSTKPPA). The span at 83-98 (GTDTKLSETGTTTQSA) shows a compositional bias: polar residues. One can recognise a WAP 2 domain in the interval 125-173 (VREKQGTCPSVDIPKLGLCEDQCQVDSQCSGNMKCCRNGCGKMACTTPK). Intrachain disulfides connect cysteine 132–cysteine 160, cysteine 143–cysteine 164, cysteine 147–cysteine 159, and cysteine 153–cysteine 169.

In terms of assembly, homotrimer; disulfide-linked.

It localises to the secreted. Functionally, broad range protease inhibitor. The protein is WAP four-disulfide core domain protein 2 (Wfdc2) of Mus musculus (Mouse).